Here is a 575-residue protein sequence, read N- to C-terminus: Probable lysosomal cobalamin transporter (575 aa).

5 helical membrane passes run 8–28 (LIWV…SVFI), 46–66 (IVAI…VALV), 95–115 (LVYY…VPFV), 144–164 (YTLS…FVPI), and 188–208 (ALTF…ALHT). Residue Asn233 is glycosylated (N-linked (GlcNAc...) asparagine). The next 4 helical transmembrane spans lie at 314 to 334 (LVGL…ILTA), 376 to 396 (AIFT…IATV), 420 to 440 (VMTA…SMIV), and 504 to 524 (FGAI…LALI). Residues 537 to 549 (QLDEDAEEAEEEA) are compositionally biased toward acidic residues. The interval 537–556 (QLDEDAEEAEEEALLSGSRR) is disordered.

Belongs to the LIMR family. LMBRD1 subfamily.

Its subcellular location is the lysosome membrane. Functionally, probable lysosomal cobalamin transporter. Required to export cobalamin from lysosomes allowing its conversion to cofactors. The chain is Probable lysosomal cobalamin transporter from Emericella nidulans (strain FGSC A4 / ATCC 38163 / CBS 112.46 / NRRL 194 / M139) (Aspergillus nidulans).